We begin with the raw amino-acid sequence, 134 residues long: MGKDTIADIITSIRNADMNRKGTVRIGSTNITESIVKILLREGFIENVRKHRENNQYFLILTLRHRRNKKESYKTILNLKRISRPGLRIYSNSQRIPRILGGIGIVILSTSQGIMTDREARLKRIGGEILCYIW.

This sequence belongs to the universal ribosomal protein uS8 family. As to quaternary structure, part of the 30S ribosomal subunit.

It is found in the plastid. The protein resides in the chloroplast. In terms of biological role, one of the primary rRNA binding proteins, it binds directly to 16S rRNA central domain where it helps coordinate assembly of the platform of the 30S subunit. The polypeptide is Small ribosomal subunit protein uS8c (rps8) (Arabidopsis thaliana (Mouse-ear cress)).